Here is a 204-residue protein sequence, read N- to C-terminus: Inner membrane-spanning protein YciB (204 aa).

6 helical membrane-spanning segments follow: residues 3–23 (AEISPLLKFVLELGPLMVFFF), 45–65 (IFIATGLFMIATATALTVSWI), 70–90 (LPIMPLISGIVVFVFGALTLW), 107–127 (LFGVILLGGLFFGQSLLGYVF), 145–165 (WGVFFLFLAVLNEVVWRMFTT), and 168–188 (WVAFKVWGTMPITIIFTMAQM).

It belongs to the YciB family.

Its subcellular location is the cell inner membrane. Its function is as follows. Plays a role in cell envelope biogenesis, maintenance of cell envelope integrity and membrane homeostasis. This Agrobacterium fabrum (strain C58 / ATCC 33970) (Agrobacterium tumefaciens (strain C58)) protein is Inner membrane-spanning protein YciB.